The sequence spans 274 residues: Glutamate--cysteine ligase regulatory subunit (274 aa).

Lys-263 carries the N6-acetyllysine modification.

The protein belongs to the aldo/keto reductase family. Glutamate--cysteine ligase light chain subfamily. In terms of assembly, heterodimer of a catalytic heavy chain and a regulatory light chain. In terms of tissue distribution, in all tissues examined. Highest levels in skeletal muscle.

It participates in sulfur metabolism; glutathione biosynthesis; glutathione from L-cysteine and L-glutamate: step 1/2. This Homo sapiens (Human) protein is Glutamate--cysteine ligase regulatory subunit (GCLM).